The following is a 314-amino-acid chain: tRNA pseudouridine synthase B (314 aa).

His43 is a substrate binding site. Asp48 serves as the catalytic Nucleophile. Positions 76, 179, and 200 each coordinate substrate.

It belongs to the pseudouridine synthase TruB family. Type 1 subfamily.

The catalysed reaction is uridine(55) in tRNA = pseudouridine(55) in tRNA. In terms of biological role, responsible for synthesis of pseudouridine from uracil-55 in the psi GC loop of transfer RNAs. This Serratia proteamaculans (strain 568) protein is tRNA pseudouridine synthase B.